Consider the following 164-residue polypeptide: Cell division protein SepF (164 aa).

The segment at Ile29–Pro57 is disordered.

This sequence belongs to the SepF family. As to quaternary structure, homodimer. Interacts with FtsZ.

The protein resides in the cytoplasm. Functionally, cell division protein that is part of the divisome complex and is recruited early to the Z-ring. Probably stimulates Z-ring formation, perhaps through the cross-linking of FtsZ protofilaments. Its function overlaps with FtsA. The protein is Cell division protein SepF of Exiguobacterium sibiricum (strain DSM 17290 / CCUG 55495 / CIP 109462 / JCM 13490 / 255-15).